The primary structure comprises 295 residues: Elongation factor Ts (295 aa).

Positions threonine 79–valine 82 are involved in Mg(2+) ion dislocation from EF-Tu.

It belongs to the EF-Ts family.

It localises to the cytoplasm. In terms of biological role, associates with the EF-Tu.GDP complex and induces the exchange of GDP to GTP. It remains bound to the aminoacyl-tRNA.EF-Tu.GTP complex up to the GTP hydrolysis stage on the ribosome. This chain is Elongation factor Ts, found in Mycoplasma mycoides subsp. mycoides SC (strain CCUG 32753 / NCTC 10114 / PG1).